Consider the following 430-residue polypeptide: Citrate synthase (430 aa).

Residues His305 and Asp363 contribute to the active site.

Belongs to the citrate synthase family. In terms of assembly, homohexamer.

The enzyme catalyses oxaloacetate + acetyl-CoA + H2O = citrate + CoA + H(+). Its pathway is carbohydrate metabolism; tricarboxylic acid cycle; isocitrate from oxaloacetate: step 1/2. Allosterically inhibited by NADH. The protein is Citrate synthase (gltA) of Coxiella burnetii (strain RSA 493 / Nine Mile phase I).